A 339-amino-acid polypeptide reads, in one-letter code: Ketol-acid reductoisomerase (NADP(+)) (339 aa).

The 182-residue stretch at 1–182 (MRVYYDRDAD…GGGRAGIIET (182 aa)) folds into the KARI N-terminal Rossmann domain. Residues 24–27 (YGSQ), Arg48, Ser51, Ser53, and 83–86 (DELQ) each bind NADP(+). His108 is an active-site residue. Gly134 lines the NADP(+) pocket. One can recognise a KARI C-terminal knotted domain in the interval 183 to 328 (SFREETETDL…ARLRDMMPWI (146 aa)). The Mg(2+) site is built by Asp191, Glu195, Glu227, and Glu231. Ser252 lines the substrate pocket.

The protein belongs to the ketol-acid reductoisomerase family. Mg(2+) is required as a cofactor.

It catalyses the reaction (2R)-2,3-dihydroxy-3-methylbutanoate + NADP(+) = (2S)-2-acetolactate + NADPH + H(+). The enzyme catalyses (2R,3R)-2,3-dihydroxy-3-methylpentanoate + NADP(+) = (S)-2-ethyl-2-hydroxy-3-oxobutanoate + NADPH + H(+). It participates in amino-acid biosynthesis; L-isoleucine biosynthesis; L-isoleucine from 2-oxobutanoate: step 2/4. Its pathway is amino-acid biosynthesis; L-valine biosynthesis; L-valine from pyruvate: step 2/4. Involved in the biosynthesis of branched-chain amino acids (BCAA). Catalyzes an alkyl-migration followed by a ketol-acid reduction of (S)-2-acetolactate (S2AL) to yield (R)-2,3-dihydroxy-isovalerate. In the isomerase reaction, S2AL is rearranged via a Mg-dependent methyl migration to produce 3-hydroxy-3-methyl-2-ketobutyrate (HMKB). In the reductase reaction, this 2-ketoacid undergoes a metal-dependent reduction by NADPH to yield (R)-2,3-dihydroxy-isovalerate. This Afipia carboxidovorans (strain ATCC 49405 / DSM 1227 / KCTC 32145 / OM5) (Oligotropha carboxidovorans) protein is Ketol-acid reductoisomerase (NADP(+)).